A 591-amino-acid chain; its full sequence is Oxaloacetate decarboxylase alpha chain (591 aa).

A Pyruvate carboxyltransferase domain is found at 3-263 (IAITDVVLRD…DTGLDILKLE (261 aa)). Positions 518-591 (PAGAGTPVTA…SVGDTLMTLA (74 aa)) constitute a Biotinyl-binding domain. At Lys-557 the chain carries N6-biotinyllysine.

In terms of assembly, composed of three chains (alpha, beta, and gamma). Biotin is required as a cofactor.

It catalyses the reaction oxaloacetate + 2 Na(+)(in) + H(+) = pyruvate + 2 Na(+)(out) + CO2. Functionally, catalyzes the decarboxylation of oxaloacetate coupled to Na(+) translocation. The sequence is that of Oxaloacetate decarboxylase alpha chain (oadA1) from Salmonella typhimurium (strain LT2 / SGSC1412 / ATCC 700720).